Consider the following 239-residue polypeptide: tRNA (guanine-N(7)-)-methyltransferase (239 aa).

The S-adenosyl-L-methionine site is built by Glu69, Glu94, Asp121, and Asp144. Residue Asp144 is part of the active site. Substrate is bound at residue Lys148. Residues 150-155 (RHNKRR) are interaction with RNA. Substrate-binding positions include Asp180 and 217–220 (TKFE).

This sequence belongs to the class I-like SAM-binding methyltransferase superfamily. TrmB family. In terms of assembly, monomer.

The enzyme catalyses guanosine(46) in tRNA + S-adenosyl-L-methionine = N(7)-methylguanosine(46) in tRNA + S-adenosyl-L-homocysteine. The protein operates within tRNA modification; N(7)-methylguanine-tRNA biosynthesis. In terms of biological role, catalyzes the formation of N(7)-methylguanine at position 46 (m7G46) in tRNA. This chain is tRNA (guanine-N(7)-)-methyltransferase, found in Yersinia pseudotuberculosis serotype O:1b (strain IP 31758).